Reading from the N-terminus, the 673-residue chain is uncharacterized protein (673 aa).

The signal sequence occupies residues 1 to 24; sequence MKIHNIIKIIIVVCLEGFALTSFA. The next 6 membrane-spanning stretches (helical) occupy residues 224-244, 253-273, 410-430, 436-456, 469-489, and 562-582; these read NAIG…MVLN, IALF…LGPL, IILI…LYFI, CMIT…MMLF, VSLS…LLIT, and VVSI…FYYF. A disordered region spans residues 624–673; it reads AQATQGKPPSSGDMPGDGGSKRSEGQKGDDSFISSGGNSSGDSLSSSGGK. Positions 642–653 are enriched in basic and acidic residues; that stretch reads GSKRSEGQKGDD. Residues 654 to 673 are compositionally biased toward low complexity; that stretch reads SFISSGGNSSGDSLSSSGGK.

This sequence belongs to the TrbL/VirB6 family.

The protein resides in the cell membrane. This is an uncharacterized protein from Rickettsia bellii (strain RML369-C).